The primary structure comprises 180 residues: Endoribonuclease YbeY (180 aa).

Residues H149, H153, and H159 each coordinate Zn(2+).

It belongs to the endoribonuclease YbeY family. Zn(2+) is required as a cofactor.

It localises to the cytoplasm. Functionally, single strand-specific metallo-endoribonuclease involved in late-stage 70S ribosome quality control and in maturation of the 3' terminus of the 16S rRNA. The polypeptide is Endoribonuclease YbeY (Prochlorococcus marinus subsp. pastoris (strain CCMP1986 / NIES-2087 / MED4)).